A 195-amino-acid chain; its full sequence is Imidazoleglycerol-phosphate dehydratase (195 aa).

The protein belongs to the imidazoleglycerol-phosphate dehydratase family.

Its subcellular location is the cytoplasm. It carries out the reaction D-erythro-1-(imidazol-4-yl)glycerol 3-phosphate = 3-(imidazol-4-yl)-2-oxopropyl phosphate + H2O. The protein operates within amino-acid biosynthesis; L-histidine biosynthesis; L-histidine from 5-phospho-alpha-D-ribose 1-diphosphate: step 6/9. This chain is Imidazoleglycerol-phosphate dehydratase, found in Burkholderia multivorans (strain ATCC 17616 / 249).